A 615-amino-acid polypeptide reads, in one-letter code: DNA mismatch repair protein MutL (615 aa).

This sequence belongs to the DNA mismatch repair MutL/HexB family.

Functionally, this protein is involved in the repair of mismatches in DNA. It is required for dam-dependent methyl-directed DNA mismatch repair. May act as a 'molecular matchmaker', a protein that promotes the formation of a stable complex between two or more DNA-binding proteins in an ATP-dependent manner without itself being part of a final effector complex. This Parabacteroides distasonis (strain ATCC 8503 / DSM 20701 / CIP 104284 / JCM 5825 / NCTC 11152) protein is DNA mismatch repair protein MutL.